Here is an 802-residue protein sequence, read N- to C-terminus: Copper-exporting P-type ATPase (802 aa).

2 HMA domains span residues 5 to 70 and 72 to 138; these read KKTT…YGVA and ETVE…YDAS. 4 residues coordinate Cu(+): Cys-16, Cys-19, Cys-83, and Cys-86. 6 helical membrane-spanning segments follow: residues 161–181, 192–212, 224–244, 256–276, 411–431, and 438–458; these read LIIS…HLFN, WFQF…FYVG, MDVL…YEMV, LYFE…YLEA, YFVP…ITLV, and PALV…LGLA. Residue Asp-495 is the 4-aspartylphosphate intermediate of the active site. 2 residues coordinate Mg(2+): Asp-690 and Asp-694. Transmembrane regions (helical) follow at residues 748–767 and 771–790; these read LFWA…LGLL and VAGA…ALRL.

This sequence belongs to the cation transport ATPase (P-type) (TC 3.A.3) family. Type IB subfamily.

Its subcellular location is the cell membrane. The enzyme catalyses Cu(+)(in) + ATP + H2O = Cu(+)(out) + ADP + phosphate + H(+). Involved in copper export. The polypeptide is Copper-exporting P-type ATPase (copA) (Staphylococcus aureus (strain COL)).